Here is a 243-residue protein sequence, read N- to C-terminus: Ubiquinone biosynthesis O-methyltransferase (243 aa).

4 residues coordinate S-adenosyl-L-methionine: Arg-45, Gly-65, Asp-86, and Leu-130.

Belongs to the methyltransferase superfamily. UbiG/COQ3 family.

The catalysed reaction is a 3-demethylubiquinol + S-adenosyl-L-methionine = a ubiquinol + S-adenosyl-L-homocysteine + H(+). It catalyses the reaction a 3-(all-trans-polyprenyl)benzene-1,2-diol + S-adenosyl-L-methionine = a 2-methoxy-6-(all-trans-polyprenyl)phenol + S-adenosyl-L-homocysteine + H(+). The protein operates within cofactor biosynthesis; ubiquinone biosynthesis. Functionally, O-methyltransferase that catalyzes the 2 O-methylation steps in the ubiquinone biosynthetic pathway. The sequence is that of Ubiquinone biosynthesis O-methyltransferase from Idiomarina loihiensis (strain ATCC BAA-735 / DSM 15497 / L2-TR).